The chain runs to 290 residues: Ribosomal RNA small subunit methyltransferase A (290 aa).

6 residues coordinate S-adenosyl-L-methionine: Asn27, Leu29, Gly54, Glu75, Asp100, and Asn125.

It belongs to the class I-like SAM-binding methyltransferase superfamily. rRNA adenine N(6)-methyltransferase family. RsmA subfamily.

It localises to the cytoplasm. It catalyses the reaction adenosine(1518)/adenosine(1519) in 16S rRNA + 4 S-adenosyl-L-methionine = N(6)-dimethyladenosine(1518)/N(6)-dimethyladenosine(1519) in 16S rRNA + 4 S-adenosyl-L-homocysteine + 4 H(+). Functionally, specifically dimethylates two adjacent adenosines (A1518 and A1519) in the loop of a conserved hairpin near the 3'-end of 16S rRNA in the 30S particle. May play a critical role in biogenesis of 30S subunits. The protein is Ribosomal RNA small subunit methyltransferase A of Streptococcus gordonii (strain Challis / ATCC 35105 / BCRC 15272 / CH1 / DL1 / V288).